We begin with the raw amino-acid sequence, 580 residues long: Sensor histidine kinase YvrG (580 aa).

The Cytoplasmic segment spans residues Met-1–Lys-6. Residues Phe-7–Val-27 form a helical membrane-spanning segment. Topologically, residues Ala-28 to Ala-261 are extracellular. The helical transmembrane segment at Met-262–Phe-282 threads the bilayer. Residues Arg-283–Gln-580 lie on the Cytoplasmic side of the membrane. Residues Gly-363–Gln-580 enclose the Histidine kinase domain. His-366 carries the post-translational modification Phosphohistidine; by autocatalysis.

The protein localises to the cell membrane. The enzyme catalyses ATP + protein L-histidine = ADP + protein N-phospho-L-histidine.. In terms of biological role, member of the two-component regulatory system YvrG/YvrH that positively regulates 7 transcriptional units (wprA, wapA-yxxG, dltABCDE, sunA, sunT-bdbA-yolJ-bdbB, sigO-rsoA, and sigX-rsiX), and negatively regulates the lytABC operon. Probably activates YvrH by phosphorylation. The protein is Sensor histidine kinase YvrG (yvrG) of Bacillus subtilis (strain 168).